The primary structure comprises 525 residues: MGAPSSLLFSTAHWRTVPFLLAFWVLLSTGTAEDPTMTPEFLRHISEKIPEEYQNPHCFTRDLNDFICFWEGERRKNASFSYSEDDQIKWCQLRTEVASNNTWWYICEFPVTDVVLFAGITISAYPCHKCQTAREIYINELVLLNPPLNVTVKEKQDPRGLLISWKPPHFQKNHDINNEIKYQVNYSTPGADMQTVEVEAGNTEIFLTDIVPAAYTVTVRCKADGVSYNGYWSDWTAPITIATIIDLRLLLLLSIAIFVALIAGVGVYIFMRHGMYLKHKVWPQVPTPENNFQGLFTTHKGNFKLWLGQADAYLLWISRHVFQEDPSSTLEVLSELPPAALPQSFNPNPLKDSYVVLDENRMPCSLEWLEAQRHKTVIVGAESMDSRLQTVNKDVVLEDTSKGQIAVKANNRVHSLEGDGSQGEAFREDEYVEAPRMEHERHRVSRENSVSSDGKQSIPSSFEYTELQTCEGLLSPKPRPVPPRMPLKYAYLDMSSSGEHSPPPSPNFYQNSPITNFLAPIYSQS.

The first 32 residues, 1-32 (MGAPSSLLFSTAHWRTVPFLLAFWVLLSTGTA), serve as a signal peptide directing secretion. The Extracellular portion of the chain corresponds to 33 to 249 (EDPTMTPEFL…TIATIIDLRL (217 aa)). The cysteines at positions 58 and 68 are disulfide-linked. Asn77, Asn100, Asn149, and Asn185 each carry an N-linked (GlcNAc...) asparagine glycan. A disulfide bridge connects residues Cys91 and Cys107. The Fibronectin type-III domain occupies 146–246 (PPLNVTVKEK…APITIATIID (101 aa)). The WSXWS motif signature appears at 232–236 (WSDWT). The helical transmembrane segment at 250–270 (LLLLSIAIFVALIAGVGVYIF) threads the bilayer. The Cytoplasmic portion of the chain corresponds to 271–525 (MRHGMYLKHK…NFLAPIYSQS (255 aa)). The Box 1 motif signature appears at 281 to 289 (VWPQVPTPE). 2 disordered regions span residues 434–459 (APRM…QSIP) and 492–513 (LDMS…QNSP). Residues 447–459 (ENSVSSDGKQSIP) are compositionally biased toward polar residues. An ITIM motif motif is present at residues 487–492 (LKYAYL).

The protein belongs to the type I cytokine receptor family. Type 1 subfamily. As to expression, expressed in the ventral blood island from stage 28 through to stage 36. Expressed in the circulating blood by stage 40. In the adult, highly expressed in peripheral blood cells including immature erythrocytes and basophils, and moderately expressed in the hematopoietic organs: liver, kidney and spleen. Expressed at a low level in adult brain.

The protein localises to the cell membrane. In terms of biological role, receptor for erythropoietin. Mediates erythropoietin-induced erythroblast proliferation and differentiation. This is Erythropoietin receptor from Xenopus laevis (African clawed frog).